We begin with the raw amino-acid sequence, 123 residues long: Small ribosomal subunit protein uS12 (123 aa).

D89 carries the 3-methylthioaspartic acid modification.

This sequence belongs to the universal ribosomal protein uS12 family. Part of the 30S ribosomal subunit. Contacts proteins S8 and S17. May interact with IF1 in the 30S initiation complex.

Functionally, with S4 and S5 plays an important role in translational accuracy. Interacts with and stabilizes bases of the 16S rRNA that are involved in tRNA selection in the A site and with the mRNA backbone. Located at the interface of the 30S and 50S subunits, it traverses the body of the 30S subunit contacting proteins on the other side and probably holding the rRNA structure together. The combined cluster of proteins S8, S12 and S17 appears to hold together the shoulder and platform of the 30S subunit. This is Small ribosomal subunit protein uS12 from Rhodopseudomonas palustris (strain HaA2).